An 858-amino-acid polypeptide reads, in one-letter code: Zinc finger protein ZXDC (858 aa).

Disordered regions lie at residues Met-1 to Gly-127 and Pro-151 to Gly-174. 3 stretches are compositionally biased toward low complexity: residues Pro-23–Pro-35, Gly-84–Glu-97, and Pro-151–Ser-171. Ser-34 bears the Phosphoserine mark. The residue at position 172 (Thr-172) is a Phosphothreonine. 10 C2H2-type zinc fingers span residues Tyr-175–His-199, Phe-208–His-232, Phe-238–His-262, Phe-268–His-290, Tyr-297–His-321, Phe-328–His-352, Phe-358–His-382, Phe-388–His-412, Phe-418–His-442, and Ser-451–His-476. Residues Asp-579 to Ser-688 are required for transcriptional activation. Lys-660 is covalently cross-linked (Glycyl lysine isopeptide (Lys-Gly) (interchain with G-Cter in SUMO)). Disordered stretches follow at residues Lys-660–Gln-696, Lys-726–His-756, and Gly-837–Gln-858. A Phosphoserine modification is found at Ser-665. The segment covering Gln-675–Pro-687 has biased composition (polar residues). Positions Pro-781–Gln-858 are interaction with CIITA. Positions Phe-847–Gln-858 are enriched in polar residues.

This sequence belongs to the ZXD family. As to quaternary structure, self-associates. Interacts with ZXDA and CIITA. Post-translationally, sumoylated at Lys-660 with SUMO1, SUMO2 and SUMO3; sumoylation enhances the activity of the transcriptional activation domain. As to expression, expressed at high levels in heart, kidney, liver and testis, at moderate levels in brain and stomach, and at low levels in lung, muscle, placenta, small intestine and spleen.

It localises to the nucleus. Cooperates with CIITA to promote transcription of MHC class I and MHC class II genes. This chain is Zinc finger protein ZXDC (ZXDC), found in Homo sapiens (Human).